The sequence spans 119 residues: Large ribosomal subunit protein uL24 (119 aa).

Belongs to the universal ribosomal protein uL24 family. In terms of assembly, part of the 50S ribosomal subunit.

One of two assembly initiator proteins, it binds directly to the 5'-end of the 23S rRNA, where it nucleates assembly of the 50S subunit. Functionally, one of the proteins that surrounds the polypeptide exit tunnel on the outside of the subunit. In Clavibacter michiganensis subsp. michiganensis (strain NCPPB 382), this protein is Large ribosomal subunit protein uL24.